The following is a 424-amino-acid chain: Serine--tRNA ligase (424 aa).

230 to 232 (TAE) serves as a coordination point for L-serine. 261 to 263 (RSE) is an ATP binding site. Glu-284 lines the L-serine pocket. 348–351 (EISS) is an ATP binding site. Ser-384 is a binding site for L-serine.

The protein belongs to the class-II aminoacyl-tRNA synthetase family. Type-1 seryl-tRNA synthetase subfamily. In terms of assembly, homodimer. The tRNA molecule binds across the dimer.

The protein resides in the cytoplasm. The catalysed reaction is tRNA(Ser) + L-serine + ATP = L-seryl-tRNA(Ser) + AMP + diphosphate + H(+). It catalyses the reaction tRNA(Sec) + L-serine + ATP = L-seryl-tRNA(Sec) + AMP + diphosphate + H(+). Its pathway is aminoacyl-tRNA biosynthesis; selenocysteinyl-tRNA(Sec) biosynthesis; L-seryl-tRNA(Sec) from L-serine and tRNA(Sec): step 1/1. Functionally, catalyzes the attachment of serine to tRNA(Ser). Is also able to aminoacylate tRNA(Sec) with serine, to form the misacylated tRNA L-seryl-tRNA(Sec), which will be further converted into selenocysteinyl-tRNA(Sec). The chain is Serine--tRNA ligase from Streptococcus pneumoniae (strain ATCC 700669 / Spain 23F-1).